Here is a 97-residue protein sequence, read N- to C-terminus: MDKRRAHVWISGRVHGVAFRAYTQEAAYHLGIGGWVRNLPDGRVEAVFEGDADKVARMVEWCRKGSPMSRVTEVEVREEDFRGEFVRFEITFGRWGA.

The 88-residue stretch at 5-92 (RAHVWISGRV…GEFVRFEITF (88 aa)) folds into the Acylphosphatase-like domain. Active-site residues include arginine 20 and asparagine 38.

The protein belongs to the acylphosphatase family.

The catalysed reaction is an acyl phosphate + H2O = a carboxylate + phosphate + H(+). This chain is Acylphosphatase (acyP), found in Syntrophobacter fumaroxidans (strain DSM 10017 / MPOB).